A 185-amino-acid chain; its full sequence is uncharacterized protein (185 aa).

This is an uncharacterized protein from Trypanosoma brucei brucei.